The sequence spans 233 residues: Methyltransferase srdJ (233 aa).

Residues 1–32 (MFQVQTAGTRTGTSSPDTTTSEAGLGSTPPMP) form a disordered region. Residues 9–21 (TRTGTSSPDTTTS) show a composition bias toward low complexity. Positions 40, 52, and 81 each coordinate S-adenosyl-L-methionine. A Required for methyltransferase activity motif is present at residues 140–146 (EISSQKY).

Belongs to the methyltransferase superfamily.

Methyltransferase; part of the gene cluster that mediates the biosynthesis of sordarial, a salicylic aldehyde structurally related to the phytotoxin pyriculol. The most interesting aspect of this pathway is formation of an aromatic product from the highly reducing polyketide synthase srdA. SrdA synthesizes a reduced polyketide chain from one molecule of acetyl-CoA and five molecules of malonyl-CoA. The polyketide chain is then reductively released as an aldehyde. The oxidoreductases srdC, srdD and srdE then oxidize one of the hydroxy groups to facilitate the intramolecular aldol condensation, followed by dehydration to yield a salicylic aldehyde. This aldehyde can undergo facile reduction by endogenous reductases to yield the alcohol 1-hydroxy-2-hydroxymethyl-3-pent-1,3-dienylbenzene. The flavin-dependent srdI counteract against the propensity of the aldehydes to be reduced under physiological conditions and is responsible for reoxidizing 1-hydroxy-2-hydroxymethyl-3-pent-1,3-dienylbenzene back to the salicylic aldehyde. This salicylic aldehyde is then selectively epoxidized by the cupin-domain-containing oxidoreductase srdB to yield the epoxide, which can be hydrolyzed stereoselectively by the hydrolase srdG to give the final product sordarial. In Neurospora crassa (strain ATCC 24698 / 74-OR23-1A / CBS 708.71 / DSM 1257 / FGSC 987), this protein is Methyltransferase srdJ.